A 37-amino-acid chain; its full sequence is Large ribosomal subunit protein bL36c (37 aa).

The protein belongs to the bacterial ribosomal protein bL36 family.

It is found in the plastid. The protein resides in the chloroplast. The sequence is that of Large ribosomal subunit protein bL36c from Pinus koraiensis (Korean pine).